Here is a 179-residue protein sequence, read N- to C-terminus: Large ribosomal subunit protein uL6 (179 aa).

It belongs to the universal ribosomal protein uL6 family. In terms of assembly, part of the 50S ribosomal subunit.

In terms of biological role, this protein binds to the 23S rRNA, and is important in its secondary structure. It is located near the subunit interface in the base of the L7/L12 stalk, and near the tRNA binding site of the peptidyltransferase center. The polypeptide is Large ribosomal subunit protein uL6 (Chlorobium luteolum (strain DSM 273 / BCRC 81028 / 2530) (Pelodictyon luteolum)).